The chain runs to 798 residues: uncharacterized protein (798 aa).

The span at 1–13 (MSSSQSPSTPSAS) shows a compositional bias: low complexity. The transit peptide at 1–58 (MSSSQSPSTPSASLVDSSDSKHPDDLPQIYKRRSVWTSSEDAVSSSNSPEQTTPFTVR) directs the protein to the chloroplast. Disordered stretches follow at residues 1–99 (MSSS…WQDA), 135–158 (AEKK…SMCT), and 417–473 (TGLI…AEPS). The segment covering 35 to 55 (VWTSSEDAVSSSNSPEQTTPF) has biased composition (polar residues). Residues 57 to 79 (VREDTNADIARELDLPDDPEPHL) show a composition bias toward basic and acidic residues. Residues 137–146 (KKKRKKKKKA) show a composition bias toward basic residues. Positions 462 to 473 (AAPAEAQGAEPS) are enriched in low complexity. The stretch at 578-658 (RSNMEVAGKL…MLSEARGLRD (81 aa)) forms a coiled coil. A disordered region spans residues 749-798 (DDLKAPAPEPAPLSPGGHRSVESLADEAGITDQAGSLLPAKDNRPSEDLD). Residue Ser762 is modified to Phosphoserine. Over residues 789-798 (KDNRPSEDLD) the composition is skewed to basic and acidic residues.

It is found in the plastid. It localises to the chloroplast. This is an uncharacterized protein from Arabidopsis thaliana (Mouse-ear cress).